The following is a 237-amino-acid chain: Transcriptional regulatory protein YvrH (237 aa).

One can recognise a Response regulatory domain in the interval serine 5–leucine 119. Position 55 is a 4-aspartylphosphate (aspartate 55). The segment at residues asparagine 131 to proline 230 is a DNA-binding region (ompR/PhoB-type).

In terms of processing, phosphorylated by YvrG.

Its subcellular location is the cytoplasm. In terms of biological role, member of the two-component regulatory system YvrG/YvrH that positively regulates 7 transcriptional units (wprA, wapA-yxxG, dltABCDE, sunA, sunT-bdbA-yolJ-bdbB, sigO-rsoA, and sigX-rsiX), and negatively regulates the lytABC operon. This is Transcriptional regulatory protein YvrH (yvrH) from Bacillus subtilis (strain 168).